Reading from the N-terminus, the 955-residue chain is Auxin response factor 11 (955 aa).

The TF-B3 DNA-binding region spans 143 to 245; sequence FCKNLTASDT…QLLLGVRRAT (103 aa). Over residues 518-543 the composition is skewed to polar residues; it reads ESKLNATSRDPRNTDSYTSRSTSEQN. Disordered regions lie at residues 518–573 and 609–646; these read ESKL…LSSA and TQGN…KSVN. A compositionally biased stretch (basic residues) spans 551–560; that stretch reads KTRRSKKGLP. The PB1 domain maps to 852 to 936; sequence RTYTKVQKQG…RCIRILSPSE (85 aa).

This sequence belongs to the ARF family. As to quaternary structure, homodimers and heterodimers.

The protein localises to the nucleus. Its function is as follows. Auxin response factors (ARFs) are transcriptional factors that bind specifically to the DNA sequence 5'-TGTCTC-3' found in the auxin-responsive promoter elements (AuxREs). This is Auxin response factor 11 (ARF11) from Oryza sativa subsp. indica (Rice).